The following is a 137-amino-acid chain: Lysozyme (137 aa).

The N-terminal stretch at Met1–Ala18 is a signal peptide. In terms of domain architecture, C-type lysozyme spans Lys19–Cys137. Disulfide bonds link Cys24–Cys137, Cys45–Cys127, Cys79–Cys93, and Cys89–Cys107. Catalysis depends on residues Glu50 and Asp67.

Belongs to the glycosyl hydrolase 22 family.

The catalysed reaction is Hydrolysis of (1-&gt;4)-beta-linkages between N-acetylmuramic acid and N-acetyl-D-glucosamine residues in a peptidoglycan and between N-acetyl-D-glucosamine residues in chitodextrins.. Its function is as follows. Lysozymes have primarily a bacteriolytic function; those in tissues and body fluids are associated with the monocyte-macrophage system and enhance the activity of immunoagents. Active against E.coli and M.luteus. In Bombyx mori (Silk moth), this protein is Lysozyme.